A 252-amino-acid chain; its full sequence is Cell division protein ZapD (252 aa).

The protein belongs to the ZapD family. In terms of assembly, interacts with FtsZ.

It localises to the cytoplasm. Its function is as follows. Cell division factor that enhances FtsZ-ring assembly. Directly interacts with FtsZ and promotes bundling of FtsZ protofilaments, with a reduction in FtsZ GTPase activity. This chain is Cell division protein ZapD, found in Chromobacterium violaceum (strain ATCC 12472 / DSM 30191 / JCM 1249 / CCUG 213 / NBRC 12614 / NCIMB 9131 / NCTC 9757 / MK).